Here is a 302-residue protein sequence, read N- to C-terminus: Protease HtpX homolog (302 aa).

Residues Leu27–Ile47 traverse the membrane as a helical segment. His141 serves as a coordination point for Zn(2+). Residue Glu142 is part of the active site. His145 provides a ligand contact to Zn(2+). A run of 2 helical transmembrane segments spans residues Val151–Ala171 and Ile195–Ile215. Glu220 contacts Zn(2+).

This sequence belongs to the peptidase M48B family. Zn(2+) serves as cofactor.

Its subcellular location is the cell inner membrane. This Aquifex aeolicus (strain VF5) protein is Protease HtpX homolog.